Consider the following 76-residue polypeptide: Sec-independent protein translocase protein TatA (76 aa).

The helical transmembrane segment at 1–21 (MGSFSIWHWLIVLAVVLLLFG) threads the bilayer. The tract at residues 43–76 (MSDEDAKDDARDSGRTIDAKADETVNDVKKTTKS) is disordered. Basic and acidic residues predominate over residues 50-76 (DDARDSGRTIDAKADETVNDVKKTTKS).

The protein belongs to the TatA/E family. The Tat system comprises two distinct complexes: a TatABC complex, containing multiple copies of TatA, TatB and TatC subunits, and a separate TatA complex, containing only TatA subunits. Substrates initially bind to the TatABC complex, which probably triggers association of the separate TatA complex to form the active translocon.

It localises to the cell inner membrane. Part of the twin-arginine translocation (Tat) system that transports large folded proteins containing a characteristic twin-arginine motif in their signal peptide across membranes. TatA could form the protein-conducting channel of the Tat system. The polypeptide is Sec-independent protein translocase protein TatA (Brucella anthropi (strain ATCC 49188 / DSM 6882 / CCUG 24695 / JCM 21032 / LMG 3331 / NBRC 15819 / NCTC 12168 / Alc 37) (Ochrobactrum anthropi)).